Consider the following 336-residue polypeptide: Ferredoxin--NADP reductase 1 (336 aa).

7 residues coordinate FAD: Glu37, Lys45, Phe50, Val90, Leu125, Asp287, and Thr328.

This sequence belongs to the ferredoxin--NADP reductase type 2 family. Homodimer. The cofactor is FAD.

The catalysed reaction is 2 reduced [2Fe-2S]-[ferredoxin] + NADP(+) + H(+) = 2 oxidized [2Fe-2S]-[ferredoxin] + NADPH. This is Ferredoxin--NADP reductase 1 from Bacillus velezensis (strain DSM 23117 / BGSC 10A6 / LMG 26770 / FZB42) (Bacillus amyloliquefaciens subsp. plantarum).